The following is a 513-amino-acid chain: ATP synthase subunit alpha (513 aa).

Residue 169-176 coordinates ATP; sequence GDRQTGKT.

Belongs to the ATPase alpha/beta chains family. As to quaternary structure, F-type ATPases have 2 components, CF(1) - the catalytic core - and CF(0) - the membrane proton channel. CF(1) has five subunits: alpha(3), beta(3), gamma(1), delta(1), epsilon(1). CF(0) has three main subunits: a(1), b(2) and c(9-12). The alpha and beta chains form an alternating ring which encloses part of the gamma chain. CF(1) is attached to CF(0) by a central stalk formed by the gamma and epsilon chains, while a peripheral stalk is formed by the delta and b chains.

It is found in the cell inner membrane. It carries out the reaction ATP + H2O + 4 H(+)(in) = ADP + phosphate + 5 H(+)(out). Its function is as follows. Produces ATP from ADP in the presence of a proton gradient across the membrane. The alpha chain is a regulatory subunit. The sequence is that of ATP synthase subunit alpha from Pseudoalteromonas translucida (strain TAC 125).